A 445-amino-acid polypeptide reads, in one-letter code: MYKAKRTAAQKVRRCLGKYELGRAIGQGTFAKVRFAKNMETGDHVAIKILDKAKVQKHRLVEQIRREICTMKLIQHPNVVHLHEVMGSKTRIFIVLEYVMGGELHDIIATSGRLKEDEARKYFQQLINAVDYCHSRGVYHRDLKLENLLLDTAGNIKVSDFGLSAISEQVKADGLLHTTCGTPNYVAPEVIEDKGYDGALADLWSCGVILFVLLAGYLPFEDENIVSLYNKISGAQFTCPSWFSAEAKRLIARILDPNPATRITTSQVLQDQWFKKGYESPVFDDKYYPYFHDVYDAFGDSEEKHVKEAMEEQPTLMNAFELISLNKGLNLDNFFESDKKYKRETRFTSQCPPKEIINRIEEAANLLGFNIQKRNYRMRMENIKEGRKGHLNIATEVFQVAPSLHVVELKKAKGDTLEFQKFYQTLSTQLKDVVWELEDAAEDMS.

The 256-residue stretch at 19–274 folds into the Protein kinase domain; the sequence is YELGRAIGQG…TSQVLQDQWF (256 aa). Residues 25 to 33 and Lys-48 contribute to the ATP site; that span reads IGQGTFAKV. Catalysis depends on Asp-142, which acts as the Proton acceptor. The tract at residues 160–189 is activation loop; that stretch reads DFGLSAISEQVKADGLLHTTCGTPNYVAPE. An NAF domain is found at 309-336; the sequence is AMEEQPTLMNAFELISLNKGLNLDNFFE. Positions 342-371 are PPI; it reads KRETRFTSQCPPKEIINRIEEAANLLGFNI.

Belongs to the protein kinase superfamily. CAMK Ser/Thr protein kinase family. SNF1 subfamily. The cofactor is Mn(2+).

The enzyme catalyses L-seryl-[protein] + ATP = O-phospho-L-seryl-[protein] + ADP + H(+). The catalysed reaction is L-threonyl-[protein] + ATP = O-phospho-L-threonyl-[protein] + ADP + H(+). CIPK serine-threonine protein kinases interact with CBL proteins. Binding of a CBL protein to the regulatory NAF domain of CIPK protein lead to the activation of the kinase in a calcium-dependent manner. In Oryza sativa subsp. japonica (Rice), this protein is CBL-interacting protein kinase 3 (CIPK3).